The chain runs to 716 residues: DEAD-box ATP-dependent RNA helicase 31 (716 aa).

Residues 99 to 188 (GILKSDDEDE…LRLEDESSDE (90 aa)) form a disordered region. Residues 110-121 (DRSRGRNQEKRG) are compositionally biased toward basic and acidic residues. Residues 144-153 (SRIQGKSSEA) show a composition bias toward polar residues. Over residues 155 to 188 (FRGRKETSFSRDREDEKGLRKREDLRLEDESSDE) the composition is skewed to basic and acidic residues. A Q motif motif is present at residues 248–276 (TRFDHYPLSPLSLKAIKDAGYETMTVVQE). The Helicase ATP-binding domain maps to 279-462 (LPIILKGKDV…LVALRRDHEF (184 aa)). 292–299 (AKTGTGKT) contacts ATP. A DEAD box motif is present at residues 410-413 (DEAD). The region spanning 497 to 643 (LREHIMGNVD…IDPETVKKVQ (147 aa)) is the Helicase C-terminal domain.

Belongs to the DEAD box helicase family.

The catalysed reaction is ATP + H2O = ADP + phosphate + H(+). The chain is DEAD-box ATP-dependent RNA helicase 31 (RH31) from Arabidopsis thaliana (Mouse-ear cress).